The chain runs to 189 residues: Elongation factor P (189 aa).

Lysine 34 carries the N6-(3,6-diaminohexanoyl)-5-hydroxylysine modification.

Belongs to the elongation factor P family. May be beta-lysylated on the epsilon-amino group of Lys-34 by the combined action of EpmA and EpmB, and then hydroxylated on the C5 position of the same residue by EpmC (if this protein is present). Lysylation is critical for the stimulatory effect of EF-P on peptide-bond formation. The lysylation moiety may extend toward the peptidyltransferase center and stabilize the terminal 3-CCA end of the tRNA. Hydroxylation of the C5 position on Lys-34 may allow additional potential stabilizing hydrogen-bond interactions with the P-tRNA.

It is found in the cytoplasm. It participates in protein biosynthesis; polypeptide chain elongation. Its function is as follows. Involved in peptide bond synthesis. Alleviates ribosome stalling that occurs when 3 or more consecutive Pro residues or the sequence PPG is present in a protein, possibly by augmenting the peptidyl transferase activity of the ribosome. Modification of Lys-34 is required for alleviation. This Idiomarina loihiensis (strain ATCC BAA-735 / DSM 15497 / L2-TR) protein is Elongation factor P.